Here is a 330-residue protein sequence, read N- to C-terminus: Aspartate--ammonia ligase (330 aa).

This sequence belongs to the class-II aminoacyl-tRNA synthetase family. AsnA subfamily.

It is found in the cytoplasm. The enzyme catalyses L-aspartate + NH4(+) + ATP = L-asparagine + AMP + diphosphate + H(+). The protein operates within amino-acid biosynthesis; L-asparagine biosynthesis; L-asparagine from L-aspartate (ammonia route): step 1/1. In Streptococcus pneumoniae serotype 19F (strain G54), this protein is Aspartate--ammonia ligase.